The chain runs to 604 residues: Putative O-acetyltransferase SAR0937 (604 aa).

The next 11 membrane-spanning stretches (helical) occupy residues 15–35, 43–63, 85–105, 150–170, 176–196, 212–232, 240–260, 267–287, 310–330, 332–352, and 377–397; these read YMPG…IYHL, GFLG…SLLL, LLPA…LLKS, AIEE…LLTI, IGFI…FIYS, LQTL…KLKN, YVID…FFII, IYDG…ASVV, YSLY…YVDG, IPVY…ELSY, and FIRM…LVGA. Residues serine 459, aspartate 581, and histidine 584 contribute to the active site.

It belongs to the acyltransferase 3 family.

Its subcellular location is the cell membrane. The polypeptide is Putative O-acetyltransferase SAR0937 (Staphylococcus aureus (strain MRSA252)).